Here is a 138-residue protein sequence, read N- to C-terminus: Large ribosomal subunit protein uL16c (138 aa).

The protein belongs to the universal ribosomal protein uL16 family. Part of the 50S ribosomal subunit.

The protein localises to the plastid. The protein resides in the chloroplast. The chain is Large ribosomal subunit protein uL16c from Physcomitrium patens (Spreading-leaved earth moss).